Consider the following 79-residue polypeptide: MPVAVGPYGQSQPSCFDRVKMGFMMGFAVGMAAGALFGTFSCLRFGMRGRELMGGVGKTMMQSGGTFGTFMAIGMGIRC.

A helical transmembrane segment spans residues 23-43; that stretch reads FMMGFAVGMAAGALFGTFSCL. Positions 42 to 60 are sufficient for antibacterial activity; sequence CLRFGMRGRELMGGVGKTM.

It belongs to the MGR2 family.

Its subcellular location is the mitochondrion inner membrane. Its function is as follows. Has antibacterial activity against a variety of bacteria including S.aureus, P.aeruginosa and M.tuberculosis. Acts by inducing bacterial membrane breakage. Induces production of reactive oxygen species (ROS) which are necessary for cell proliferation. May play a role in inducing oxidative DNA damage and replicative senescence. May play a role in the coordination of mitochondrial morphology and cell proliferation. This chain is Reactive oxygen species modulator 1 (romo1), found in Xenopus tropicalis (Western clawed frog).